The chain runs to 991 residues: Polyribonucleotide nucleotidyltransferase 2, mitochondrial (991 aa).

The transit peptide at 1-39 directs the protein to the mitochondrion; the sequence is MSSIVNRASSASLPNFLAWRALGFRTICSGRLGFAPSVP. In terms of domain architecture, KH spans 609 to 667; the sequence is PRLATLKYSNDSLRTLIGPMGVLKRKIEVETGARLSIDNGTLTIVAKNQDVMEKAQEQV. An S1 motif 1 domain is found at 678-746; that stretch reads GGVYKGTVSS…VRGNIKLSRK (69 aa). A disordered region spans residues 813 to 865; that stretch reads EAEKSSPVNDNDKPRRAATSKPDRKPKSTASKLIATQKEEEALESIAPEETSA. Positions 822–838 are enriched in basic and acidic residues; that stretch reads DNDKPRRAATSKPDRKP. The S1 motif 2 domain occupies 925–987; the sequence is GTEMTATVDH…GVPVMALVDE (63 aa).

It belongs to the polyribonucleotide nucleotidyltransferase family.

The protein localises to the mitochondrion. The catalysed reaction is RNA(n+1) + phosphate = RNA(n) + a ribonucleoside 5'-diphosphate. In terms of biological role, involved in the 3'-end maturation of mitochondrial mRNAs, rRNAs and tRNAs. Functions as a poly(A) mRNA 3'-5' degrading phosphorylase and is required for the degradation of highly expressed transcripts of non-coding regions. This chain is Polyribonucleotide nucleotidyltransferase 2, mitochondrial (PNP2), found in Arabidopsis thaliana (Mouse-ear cress).